The chain runs to 218 residues: Nuclear cap-binding protein subunit 2 (218 aa).

Residues Tyr-24, Tyr-49, 118 to 122, 129 to 133, and 139 to 140 each bind mRNA; these read TIDLD, RQFGR, and QV. One can recognise an RRM domain in the interval 46–124; sequence ATIYVGNLSF…REITIDLDPG (79 aa). Residues 176–194 are compositionally biased toward basic residues; the sequence is DPHKNHHHHHHGHHHHHGQ. Positions 176–200 are disordered; sequence DPHKNHHHHHHGHHHHHGQPHAAAA.

This sequence belongs to the RRM NCBP2 family. As to quaternary structure, component of the nuclear cap-binding complex (CBC).

It localises to the nucleus. Component of the cap-binding complex (CBC) involved in the nuclear export of capped U snRNAs. The CBC complex is required for efficient pre-mRNA splicing through efficient commitment complex and spliceosome formation; and involved in rRNA processing at sites A0, A1 and A2. This is Nuclear cap-binding protein subunit 2 (CBC2) from Eremothecium gossypii (strain ATCC 10895 / CBS 109.51 / FGSC 9923 / NRRL Y-1056) (Yeast).